Consider the following 406-residue polypeptide: Phosphopentomutase (406 aa).

Asp10, Asp305, His310, Asp346, His347, and His358 together coordinate Mn(2+).

This sequence belongs to the phosphopentomutase family. Requires Mn(2+) as cofactor.

It localises to the cytoplasm. It carries out the reaction 2-deoxy-alpha-D-ribose 1-phosphate = 2-deoxy-D-ribose 5-phosphate. The catalysed reaction is alpha-D-ribose 1-phosphate = D-ribose 5-phosphate. It functions in the pathway carbohydrate degradation; 2-deoxy-D-ribose 1-phosphate degradation; D-glyceraldehyde 3-phosphate and acetaldehyde from 2-deoxy-alpha-D-ribose 1-phosphate: step 1/2. Its function is as follows. Isomerase that catalyzes the conversion of deoxy-ribose 1-phosphate (dRib-1-P) and ribose 1-phosphate (Rib-1-P) to deoxy-ribose 5-phosphate (dRib-5-P) and ribose 5-phosphate (Rib-5-P), respectively. This chain is Phosphopentomutase, found in Rhizobium meliloti (strain 1021) (Ensifer meliloti).